A 716-amino-acid chain; its full sequence is Amino-acid acetyltransferase, mitochondrial (716 aa).

A mitochondrion-targeting transit peptide spans methionine 1–histidine 44. 2 disordered regions span residues tyrosine 99–leucine 119 and leucine 487–proline 508. The span at serine 102–lysine 112 shows a compositional bias: basic and acidic residues. A compositionally biased stretch (polar residues) spans glycine 497–proline 508. Residues serine 537–proline 706 form the N-acetyltransferase domain.

Belongs to the acetyltransferase family.

Its subcellular location is the mitochondrion. It carries out the reaction L-glutamate + acetyl-CoA = N-acetyl-L-glutamate + CoA + H(+). The protein operates within amino-acid biosynthesis; L-arginine biosynthesis; N(2)-acetyl-L-ornithine from L-glutamate: step 1/4. Its function is as follows. N-acetylglutamate synthase involved in arginine biosynthesis. This is Amino-acid acetyltransferase, mitochondrial (arg2) from Neosartorya fischeri (strain ATCC 1020 / DSM 3700 / CBS 544.65 / FGSC A1164 / JCM 1740 / NRRL 181 / WB 181) (Aspergillus fischerianus).